An 899-amino-acid polypeptide reads, in one-letter code: Bifunctional uridylyltransferase/uridylyl-removing enzyme (899 aa).

A uridylyltransferase region spans residues 1 to 342 (MPQMDPELFD…RAGESGPATP (342 aa)). A uridylyl-removing region spans residues 343 to 705 (LNSRFQVRDG…TTQREFEGGT (363 aa)). The HD domain maps to 461-583 (VDAHTLNLIK…VGDQTHLDYL (123 aa)). ACT domains are found at residues 706–784 (QIFI…DEYP) and 816–897 (ILEL…SLQI).

It belongs to the GlnD family. It depends on Mg(2+) as a cofactor.

It catalyses the reaction [protein-PII]-L-tyrosine + UTP = [protein-PII]-uridylyl-L-tyrosine + diphosphate. The catalysed reaction is [protein-PII]-uridylyl-L-tyrosine + H2O = [protein-PII]-L-tyrosine + UMP + H(+). Uridylyltransferase (UTase) activity is inhibited by glutamine, while glutamine activates uridylyl-removing (UR) activity. Its function is as follows. Modifies, by uridylylation and deuridylylation, the PII regulatory proteins (GlnB and homologs), in response to the nitrogen status of the cell that GlnD senses through the glutamine level. Under low glutamine levels, catalyzes the conversion of the PII proteins and UTP to PII-UMP and PPi, while under higher glutamine levels, GlnD hydrolyzes PII-UMP to PII and UMP (deuridylylation). Thus, controls uridylylation state and activity of the PII proteins, and plays an important role in the regulation of nitrogen assimilation and metabolism. The chain is Bifunctional uridylyltransferase/uridylyl-removing enzyme from Ectopseudomonas mendocina (strain ymp) (Pseudomonas mendocina).